The sequence spans 361 residues: (S)-coclaurine N-methyltransferase (361 aa).

Positions 101, 139, 163, 167, 189, 190, and 205 each coordinate S-adenosyl-L-methionine. Residue Cys336 is part of the active site.

Belongs to the CFA/CMAS family. In terms of assembly, homodimer. Highly expressed in rhizomes. Detected in roots, petioles, flower buds and leaves. Expressed between the developing stele and ground tissues near the root apical meristem, in the immature endodermis, the pericycle and the spokes of developing xylem in the apical region of the root and in the protoderm of leaf primordia in rhizomes.

It localises to the cytoplasm. The catalysed reaction is norreticuline + S-adenosyl-L-methionine = reticuline + S-adenosyl-L-homocysteine + H(+). The enzyme catalyses (S)-coclaurine + S-adenosyl-L-methionine = (S)-N-methylcoclaurine + S-adenosyl-L-homocysteine + H(+). It carries out the reaction heliamine + S-adenosyl-L-methionine = N-methylheliamine + S-adenosyl-L-homocysteine + H(+). It participates in alkaloid biosynthesis. In terms of biological role, involved in the biosynthesis of protoberberine alkaloids. N-methyltransferase with a substrate preference for (R,S)-norreticuline but also active with dimethoxytetrahydroisoquinoline. The polypeptide is (S)-coclaurine N-methyltransferase (Thalictrum flavum subsp. glaucum (Yellow meadow rue)).